The primary structure comprises 375 residues: DNA replication and repair protein RecF (375 aa).

Gly-30–Thr-37 contributes to the ATP binding site.

It belongs to the RecF family.

The protein localises to the cytoplasm. The RecF protein is involved in DNA metabolism; it is required for DNA replication and normal SOS inducibility. RecF binds preferentially to single-stranded, linear DNA. It also seems to bind ATP. In Enterococcus faecalis (strain ATCC 700802 / V583), this protein is DNA replication and repair protein RecF.